Reading from the N-terminus, the 706-residue chain is Transmembrane 9 superfamily member 3 (706 aa).

Residues 1-33 (MRVRPKRSVITLMAIVVVMLILRNQFYSSRTRG) form the signal peptide. The Lumenal segment spans residues 34-290 (HGQEPVISSS…LSDEQSIQFH (257 aa)). The chain crosses the membrane as a helical span at residues 291–311 (WMSLANSVGIVLSISFITLII). At 312-371 (YVRVMYTDKSNSKSPKYMINIEGIETEDDLDDDKYGKYSVYTVAKDWIQNGRPNLFGLKV) the chain is on the cytoplasmic side. Residues 372–392 (LILLVSFGVQFLFTIIGSLTI) form a helical membrane-spanning segment. Topologically, residues 393-405 (SCSMNKLHNVRNS) are lumenal. The chain crosses the membrane as a helical span at residues 406-426 (VLTMAILFFVLGAFMASFVGT). Residues 427-456 (RLSMVTKTKRTKANYLDDNRYLKDYKKFSP) are Cytoplasmic-facing. The chain crosses the membrane as a helical span at residues 457–477 (IFTILCGSSLPGIVMVSTFLL). Residues 478 to 494 (NSIVWAHDSTSALPFKT) are Lumenal-facing. The helical transmembrane segment at 495-515 (IVFFMSIYFIVCIPLSLFGGI) threads the bilayer. Residues 516 to 553 (VANNIPLPQYWLSGITKDESNSDGNGLFVPKSRAKFNP) are Cytoplasmic-facing. The helical transmembrane segment at 554–574 (LVYCGIYLCGIFPLLVIYVEM) threads the bilayer. The Lumenal segment spans residues 575–592 (QYVYKSLWLEKTTFYYFY). Residues 593–613 (GFLFLSIILLCVLTMEISIIG) traverse the membrane as a helical segment. Topologically, residues 614-637 (SYLLMRFCFEDKVVRNNWRWKCFE) are cytoplasmic. A helical transmembrane segment spans residues 638–658 (MGFSGGVYMELYSLYYIFAVL). Over 659 to 665 (NIHGFSS) the chain is Lumenal. Residues 666 to 686 (ILISICYSLIFNVMCSLGLGA) traverse the membrane as a helical segment. At 687–706 (LSYLTASWFINKIYHQKVNL) the chain is on the cytoplasmic side.

This sequence belongs to the nonaspanin (TM9SF) (TC 9.A.2) family.

It localises to the golgi apparatus membrane. In terms of biological role, with EMP70 and TMN2, plays a critical role in the late stages of a nutrient-controlled pathway notably regulating FLO11 gene expression. Acts downstream of RAS2 and TOR. Essential for cell adhesion and filamentous growth. May play a role as effector of cellular copper homeostasis. This Saccharomyces cerevisiae (strain ATCC 204508 / S288c) (Baker's yeast) protein is Transmembrane 9 superfamily member 3 (TMN3).